Reading from the N-terminus, the 434-residue chain is Tol-Pal system protein TolB (434 aa).

Residues 1 to 28 (MQQTCKRKIWMQISVALVTSLWMISAQA) form the signal peptide.

Belongs to the TolB family. The Tol-Pal system is composed of five core proteins: the inner membrane proteins TolA, TolQ and TolR, the periplasmic protein TolB and the outer membrane protein Pal. They form a network linking the inner and outer membranes and the peptidoglycan layer.

It is found in the periplasm. Functionally, part of the Tol-Pal system, which plays a role in outer membrane invagination during cell division and is important for maintaining outer membrane integrity. In Alcanivorax borkumensis (strain ATCC 700651 / DSM 11573 / NCIMB 13689 / SK2), this protein is Tol-Pal system protein TolB.